The primary structure comprises 126 residues: S-adenosylmethionine decarboxylase proenzyme (126 aa).

The Schiff-base intermediate with substrate; via pyruvic acid role is filled by Ser63. Residue Ser63 is modified to Pyruvic acid (Ser); by autocatalysis. The Proton acceptor; for processing activity role is filled by His68. The active-site Proton donor; for catalytic activity is the Cys83.

The protein belongs to the prokaryotic AdoMetDC family. Type 1 subfamily. Heterotetramer of two alpha and two beta chains arranged as a dimer of alpha/beta heterodimers. It depends on pyruvate as a cofactor. Is synthesized initially as an inactive proenzyme. Formation of the active enzyme involves a self-maturation process in which the active site pyruvoyl group is generated from an internal serine residue via an autocatalytic post-translational modification. Two non-identical subunits are generated from the proenzyme in this reaction, and the pyruvate is formed at the N-terminus of the alpha chain, which is derived from the carboxyl end of the proenzyme. The post-translation cleavage follows an unusual pathway, termed non-hydrolytic serinolysis, in which the side chain hydroxyl group of the serine supplies its oxygen atom to form the C-terminus of the beta chain, while the remainder of the serine residue undergoes an oxidative deamination to produce ammonia and the pyruvoyl group blocking the N-terminus of the alpha chain.

The catalysed reaction is S-adenosyl-L-methionine + H(+) = S-adenosyl 3-(methylsulfanyl)propylamine + CO2. It participates in amine and polyamine biosynthesis; S-adenosylmethioninamine biosynthesis; S-adenosylmethioninamine from S-adenosyl-L-methionine: step 1/1. Its function is as follows. Catalyzes the decarboxylation of S-adenosylmethionine to S-adenosylmethioninamine (dcAdoMet), the propylamine donor required for the synthesis of the polyamines spermine and spermidine from the diamine putrescine. The sequence is that of S-adenosylmethionine decarboxylase proenzyme from Pelotomaculum thermopropionicum (strain DSM 13744 / JCM 10971 / SI).